The sequence spans 351 residues: Cytosolic sulfotransferase 9 (351 aa).

Basic and acidic residues predominate over residues 1 to 11 (MDEKDILRNLR). Positions 1-24 (MDEKDILRNLREEEEEEEENQSEE) are disordered. A compositionally biased stretch (acidic residues) spans 12-22 (EEEEEEEENQS). 80 to 85 (KSGTTW) is a 3'-phosphoadenylyl sulfate binding site. His-152 serves as the catalytic Proton acceptor. 3'-phosphoadenylyl sulfate-binding positions include Arg-174, Ser-182, Tyr-252, and 317 to 319 (RKG).

Belongs to the sulfotransferase 1 family. Expressed in roots and leaves.

The protein localises to the cytoplasm. In terms of biological role, sulfotransferase that utilizes 3'-phospho-5'-adenylyl sulfate (PAPS) as sulfonate donor. No activity with brassinosteroids. The protein is Cytosolic sulfotransferase 9 (STO9) of Arabidopsis thaliana (Mouse-ear cress).